The primary structure comprises 73 residues: Neutrophil elastase 2B (73 aa).

The Peptidase S1 domain occupies 1-73 (IVGGRPARPH…SGGPLVCNGL (73 aa)). The active-site Charge relay system is serine 64.

Belongs to the peptidase S1 family. Elastase subfamily.

In terms of biological role, may be involved in the degradation of connective tissue in chronic lung disease. The polypeptide is Neutrophil elastase 2B (Equus caballus (Horse)).